The sequence spans 531 residues: Phosphoinositide phospholipase C 9 (531 aa).

One can recognise a PI-PLC X-box domain in the interval 107–253 (RDMNAPLSHY…LQNKILISRR (147 aa)). Positions 265 to 385 (ENGVELEIQE…GYVKKPNFLL (121 aa)) constitute a PI-PLC Y-box domain. Ser276 is modified (phosphoserine). The 128-residue stretch at 386-513 (NAGSSGVFYP…EGIRAVPLYD (128 aa)) folds into the C2 domain.

Requires Ca(2+) as cofactor. As to expression, expressed in leaves, roots, flowers and siliques.

The protein localises to the cell membrane. It catalyses the reaction a 1,2-diacyl-sn-glycero-3-phospho-(1D-myo-inositol-4,5-bisphosphate) + H2O = 1D-myo-inositol 1,4,5-trisphosphate + a 1,2-diacyl-sn-glycerol + H(+). In terms of biological role, the production of the second messenger molecules diacylglycerol (DAG) and inositol 1,4,5-trisphosphate (IP3) is mediated by activated phosphatidylinositol-specific phospholipase C enzymes. The chain is Phosphoinositide phospholipase C 9 (PLC9) from Arabidopsis thaliana (Mouse-ear cress).